The chain runs to 111 residues: MGSSSFLVLTVSLALVTLVAAEGVKGGIEKAGVCPADNVRCFKSDPPQCHTDQDCLGARKCCYLHCGFKCVIPVKKLEEGGNKDEDVSGPCPEPGWEAKSPGSSSTGCPQK.

The first 23 residues, 1 to 23 (MGSSSFLVLTVSLALVTLVAAEG), serve as a signal peptide directing secretion. The 48-residue stretch at 27–74 (GIEKAGVCPADNVRCFKSDPPQCHTDQDCLGARKCCYLHCGFKCVIPV) folds into the WAP domain. Disulfide bonds link Cys-34–Cys-62, Cys-41–Cys-66, Cys-49–Cys-61, and Cys-55–Cys-70. The interval 80–111 (GGNKDEDVSGPCPEPGWEAKSPGSSSTGCPQK) is disordered. Residues 101 to 111 (PGSSSTGCPQK) show a composition bias toward polar residues.

Its subcellular location is the secreted. In terms of biological role, antibacterial protein. Putative acid-stable proteinase inhibitor. The chain is WAP four-disulfide core domain protein 12 (WFDC12) from Papio anubis (Olive baboon).